The chain runs to 90 residues: Acylphosphatase (90 aa).

The Acylphosphatase-like domain maps to 4–90 (RMYVKVYGIV…KGEFNNFDTY (87 aa)). Residues Arg-19 and Asn-37 contribute to the active site.

It belongs to the acylphosphatase family.

The enzyme catalyses an acyl phosphate + H2O = a carboxylate + phosphate + H(+). The chain is Acylphosphatase (acyP) from Sulfurisphaera tokodaii (strain DSM 16993 / JCM 10545 / NBRC 100140 / 7) (Sulfolobus tokodaii).